A 150-amino-acid polypeptide reads, in one-letter code: UPF0098 protein CT_736 (150 aa).

This sequence belongs to the UPF0098 family.

This Chlamydia trachomatis serovar D (strain ATCC VR-885 / DSM 19411 / UW-3/Cx) protein is UPF0098 protein CT_736.